The sequence spans 535 residues: 4-hydroxy-3-methylbut-2-enyl diphosphate reductase, apicoplast (535 aa).

Cys231 provides a ligand contact to [4Fe-4S] cluster. The (2E)-4-hydroxy-3-methylbut-2-enyl diphosphate site is built by His260 and His293. Dimethylallyl diphosphate-binding residues include His260 and His293. Isopentenyl diphosphate is bound by residues His260 and His293. Cys315 is a [4Fe-4S] cluster binding site. His343 provides a ligand contact to (2E)-4-hydroxy-3-methylbut-2-enyl diphosphate. His343 is a binding site for dimethylallyl diphosphate. His343 lines the isopentenyl diphosphate pocket. Catalysis depends on Glu345, which acts as the Proton donor. Thr383 lines the (2E)-4-hydroxy-3-methylbut-2-enyl diphosphate pocket. Cys413 is a [4Fe-4S] cluster binding site. (2E)-4-hydroxy-3-methylbut-2-enyl diphosphate-binding residues include Ser441, Ser442, Asn443, and Ser485. Dimethylallyl diphosphate contacts are provided by Ser441, Ser442, Asn443, and Ser485. Isopentenyl diphosphate contacts are provided by Ser441, Ser442, Asn443, and Ser485.

The protein belongs to the IspH family. Interacts with Fd/ferredoxin. It depends on [4Fe-4S] cluster as a cofactor.

It is found in the plastid. It localises to the apicoplast. It carries out the reaction dimethylallyl diphosphate + 2 oxidized [2Fe-2S]-[ferredoxin] + H2O = (2E)-4-hydroxy-3-methylbut-2-enyl diphosphate + 2 reduced [2Fe-2S]-[ferredoxin] + 2 H(+). The enzyme catalyses isopentenyl diphosphate + 2 oxidized [2Fe-2S]-[ferredoxin] + H2O = (2E)-4-hydroxy-3-methylbut-2-enyl diphosphate + 2 reduced [2Fe-2S]-[ferredoxin] + 2 H(+). It participates in isoprenoid biosynthesis; dimethylallyl diphosphate biosynthesis; dimethylallyl diphosphate from (2E)-4-hydroxy-3-methylbutenyl diphosphate: step 1/1. It functions in the pathway isoprenoid biosynthesis; isopentenyl diphosphate biosynthesis via DXP pathway; isopentenyl diphosphate from 1-deoxy-D-xylulose 5-phosphate: step 6/6. Functionally, catalyzes the conversion of 1-hydroxy-2-methyl-2-(E)-butenyl 4-diphosphate (HMBPP) into a mixture of isopentenyl diphosphate (IPP) and dimethylallyl diphosphate (DMAPP). Acts in the terminal step of the DOXP/MEP pathway for isoprenoid precursor biosynthesis. This is 4-hydroxy-3-methylbut-2-enyl diphosphate reductase, apicoplast from Plasmodium falciparum (isolate 3D7).